Consider the following 439-residue polypeptide: Guanine deaminase (439 aa).

The Zn(2+) site is built by H82 and H84. Residues 84 to 87 (HYPQ), 209 to 210 (RF), 237 to 240 (HLCE), and D327 each bind substrate. Residues H237 and D327 each contribute to the Zn(2+) site.

It belongs to the metallo-dependent hydrolases superfamily. ATZ/TRZ family. Zn(2+) serves as cofactor.

The enzyme catalyses guanine + H2O + H(+) = xanthine + NH4(+). The protein operates within purine metabolism; guanine degradation; xanthine from guanine: step 1/1. Its function is as follows. Catalyzes the hydrolytic deamination of guanine, producing xanthine and ammonia. This Escherichia coli (strain K12) protein is Guanine deaminase (guaD).